The chain runs to 55 residues: Large ribosomal subunit protein bL33 (55 aa).

Belongs to the bacterial ribosomal protein bL33 family.

The protein is Large ribosomal subunit protein bL33 of Methylacidiphilum infernorum (isolate V4) (Methylokorus infernorum (strain V4)).